The primary structure comprises 60 residues: uncharacterized protein (60 aa).

A helical membrane pass occupies residues 38–58 (SILAGGIIPVLFFFPLFLFLY).

Its subcellular location is the membrane. This is an uncharacterized protein from Saccharomyces cerevisiae (strain ATCC 204508 / S288c) (Baker's yeast).